A 2171-amino-acid polypeptide reads, in one-letter code: DExH-box ATP-dependent RNA helicase DExH12 (2171 aa).

Disordered regions lie at residues Ser24–Asp80, Glu218–Thr267, and Thr383–Trp426. Basic and acidic residues-rich tracts occupy residues Asn31–Thr40 and Ile50–Asp80. Residues Glu218–Glu242 are compositionally biased toward acidic residues. Basic and acidic residues predominate over residues Thr383–Glu423. In terms of domain architecture, Helicase ATP-binding 1 spans Asp514–Leu697. Ala527 to Thr534 is a binding site for ATP. The short motif at Asp639 to His642 is the DEIH box element. Positions Leu731–Cys941 constitute a Helicase C-terminal 1 domain. Positions Thr1006 to Val1308 constitute an SEC63 1 domain. Positions Thr1360–Phe1537 constitute a Helicase ATP-binding 2 domain. ATP is bound at residue Ala1373 to Thr1380. The DELH box signature appears at Asp1479–His1482. The Helicase C-terminal 2 domain maps to Ala1574–Val1779. The SEC63 2 domain occupies Pro1839–Ser2157.

Belongs to the DExH box helicase family. Interacts with CLO.

The protein resides in the nucleus. It carries out the reaction ATP + H2O = ADP + phosphate + H(+). Functionally, RNA helicase that plays an essential role in pre-mRNA splicing as component of the U5 snRNP and U4/U6-U5 tri-snRNP complexes. Involved in spliceosome assembly, activation and disassembly. The sequence is that of DExH-box ATP-dependent RNA helicase DExH12 from Arabidopsis thaliana (Mouse-ear cress).